A 400-amino-acid chain; its full sequence is Argininosuccinate synthase (400 aa).

Ala-8–Ser-16 lines the ATP pocket. Position 87 (Tyr-87) interacts with L-citrulline. Gly-117 lines the ATP pocket. Residues Thr-119, Asn-123, and Asp-124 each contribute to the L-aspartate site. Residue Asn-123 participates in L-citrulline binding. L-citrulline-binding residues include Arg-127, Ser-175, Glu-260, and Tyr-272.

It belongs to the argininosuccinate synthase family. Type 1 subfamily. Homotetramer.

The protein resides in the cytoplasm. The catalysed reaction is L-citrulline + L-aspartate + ATP = 2-(N(omega)-L-arginino)succinate + AMP + diphosphate + H(+). It functions in the pathway amino-acid biosynthesis; L-arginine biosynthesis; L-arginine from L-ornithine and carbamoyl phosphate: step 2/3. This Mycolicibacterium vanbaalenii (strain DSM 7251 / JCM 13017 / BCRC 16820 / KCTC 9966 / NRRL B-24157 / PYR-1) (Mycobacterium vanbaalenii) protein is Argininosuccinate synthase.